A 317-amino-acid polypeptide reads, in one-letter code: uncharacterized protein (317 aa).

Helical transmembrane passes span 24-44 (ISIIVLTTVFIVNYIMSTGIM), 63-83 (LSISSTLACFFSPTVGYSILA), 136-156 (LGVALAKTIIGFLYLSIISED), 187-207 (LIPIMFFMMTLVLYLSKIGFF), 229-249 (ILALTEIMNVQAAIVMAGGFL), 252-272 (GILSSKEVLIGLIIGNVLTFS), and 295-315 (IVMVNAAITLLLDIFIIAGLL).

It to M.jannaschii MJ0880, MJ1556 and MJ1589.

The protein resides in the cell membrane. This is an uncharacterized protein from Methanocaldococcus jannaschii (strain ATCC 43067 / DSM 2661 / JAL-1 / JCM 10045 / NBRC 100440) (Methanococcus jannaschii).